The chain runs to 394 residues: NAD(P)H-quinone oxidoreductase subunit H (394 aa).

This sequence belongs to the complex I 49 kDa subunit family. NDH-1 can be composed of about 15 different subunits; different subcomplexes with different compositions have been identified which probably have different functions.

The protein localises to the cellular thylakoid membrane. It catalyses the reaction a plastoquinone + NADH + (n+1) H(+)(in) = a plastoquinol + NAD(+) + n H(+)(out). It carries out the reaction a plastoquinone + NADPH + (n+1) H(+)(in) = a plastoquinol + NADP(+) + n H(+)(out). NDH-1 shuttles electrons from an unknown electron donor, via FMN and iron-sulfur (Fe-S) centers, to quinones in the respiratory and/or the photosynthetic chain. The immediate electron acceptor for the enzyme in this species is believed to be plastoquinone. Couples the redox reaction to proton translocation, and thus conserves the redox energy in a proton gradient. Cyanobacterial NDH-1 also plays a role in inorganic carbon-concentration. This chain is NAD(P)H-quinone oxidoreductase subunit H, found in Acaryochloris marina (strain MBIC 11017).